The primary structure comprises 339 residues: Glycerol-3-phosphate dehydrogenase [NAD(P)+] (339 aa).

Positions 15, 16, 36, and 110 each coordinate NADPH. Residues K110, G139, and T141 each contribute to the sn-glycerol 3-phosphate site. Residue A143 participates in NADPH binding. 5 residues coordinate sn-glycerol 3-phosphate: K195, D248, S258, R259, and N260. K195 functions as the Proton acceptor in the catalytic mechanism. R259 is an NADPH binding site. V283 and E285 together coordinate NADPH.

The protein belongs to the NAD-dependent glycerol-3-phosphate dehydrogenase family.

Its subcellular location is the cytoplasm. It carries out the reaction sn-glycerol 3-phosphate + NAD(+) = dihydroxyacetone phosphate + NADH + H(+). It catalyses the reaction sn-glycerol 3-phosphate + NADP(+) = dihydroxyacetone phosphate + NADPH + H(+). It participates in membrane lipid metabolism; glycerophospholipid metabolism. Catalyzes the reduction of the glycolytic intermediate dihydroxyacetone phosphate (DHAP) to sn-glycerol 3-phosphate (G3P), the key precursor for phospholipid synthesis. This chain is Glycerol-3-phosphate dehydrogenase [NAD(P)+], found in Enterobacter sp. (strain 638).